Here is a 191-residue protein sequence, read N- to C-terminus: Scytalone dehydratase PfmaJ (191 aa).

Positions 25, 45, and 48 each coordinate substrate. Residues histidine 80 and histidine 105 contribute to the active site. Asparagine 126 contributes to the substrate binding site.

Belongs to the scytalone dehydratase family. Homotrimer. Each subunit contains an active site, located in the central part of the hydrophobic core of the monomer, which functions independently.

Its subcellular location is the endosome. It carries out the reaction scytalone = 1,3,8-trihydroxynaphthalene + H2O. It participates in pigment biosynthesis; melanin biosynthesis. Scytalone dehydratase involved the biosynthesis of dihydroxynaphthalene (DHN)-melanin, a bluish-green pigment forming a dark layer in the conidial wall that protects the conidia from UV radiations. The first step of the pathway is the production of the pentaketide 1,3,6,8-tetrahydroxynaphthalene (1,3,6,8-THN or T4HN) by the polyketide synthase PfmaE though condensation of acetyl-CoA with malonyl-CoA. T4HN is not stable and easily oxidizes into the stable form flaviolin. T4HN is also substrate of the hydroxynaphthalene reductase PfmaG to yield scytalone. The scytalone dehydratase PfmaJ then reduces scytalone to 1,3,8-THN. 1,3,8-THN is then substrate of the hydroxynaphthalene reductase PfmaI to yield vermelone. Vermelone is further converted by the multicopper oxidase PfmaD to 1,8-DHN. Finally the laccase PFICI_06862 transforms 1,8-DHN to DHN-melanin. The roles of the 5-oxoprolinase PfmaA and the proline iminopeptidase PfmaB within the cluster have not been elucidated yet. The protein is Scytalone dehydratase PfmaJ of Pestalotiopsis fici (strain W106-1 / CGMCC3.15140).